Consider the following 125-residue polypeptide: Large ribosomal subunit protein bL12 (125 aa).

The protein belongs to the bacterial ribosomal protein bL12 family. Homodimer. Part of the ribosomal stalk of the 50S ribosomal subunit. Forms a multimeric L10(L12)X complex, where L10 forms an elongated spine to which 2 to 4 L12 dimers bind in a sequential fashion. Binds GTP-bound translation factors.

Forms part of the ribosomal stalk which helps the ribosome interact with GTP-bound translation factors. Is thus essential for accurate translation. The polypeptide is Large ribosomal subunit protein bL12 (Azorhizobium caulinodans (strain ATCC 43989 / DSM 5975 / JCM 20966 / LMG 6465 / NBRC 14845 / NCIMB 13405 / ORS 571)).